A 238-amino-acid polypeptide reads, in one-letter code: 1-(5-phosphoribosyl)-5-[(5-phosphoribosylamino)methylideneamino] imidazole-4-carboxamide isomerase (238 aa).

Catalysis depends on Asp8, which acts as the Proton acceptor. Residue Asp130 is the Proton donor of the active site.

It belongs to the HisA/HisF family.

The protein localises to the cytoplasm. The catalysed reaction is 1-(5-phospho-beta-D-ribosyl)-5-[(5-phospho-beta-D-ribosylamino)methylideneamino]imidazole-4-carboxamide = 5-[(5-phospho-1-deoxy-D-ribulos-1-ylimino)methylamino]-1-(5-phospho-beta-D-ribosyl)imidazole-4-carboxamide. Its pathway is amino-acid biosynthesis; L-histidine biosynthesis; L-histidine from 5-phospho-alpha-D-ribose 1-diphosphate: step 4/9. In Methanococcus maripaludis (strain C5 / ATCC BAA-1333), this protein is 1-(5-phosphoribosyl)-5-[(5-phosphoribosylamino)methylideneamino] imidazole-4-carboxamide isomerase.